The primary structure comprises 284 residues: Ribosomal RNA small subunit methyltransferase A (284 aa).

Residues N33, L35, G60, E81, D101, and N124 each contribute to the S-adenosyl-L-methionine site.

This sequence belongs to the class I-like SAM-binding methyltransferase superfamily. rRNA adenine N(6)-methyltransferase family. RsmA subfamily.

Its subcellular location is the cytoplasm. It catalyses the reaction adenosine(1518)/adenosine(1519) in 16S rRNA + 4 S-adenosyl-L-methionine = N(6)-dimethyladenosine(1518)/N(6)-dimethyladenosine(1519) in 16S rRNA + 4 S-adenosyl-L-homocysteine + 4 H(+). Its function is as follows. Specifically dimethylates two adjacent adenosines (A1518 and A1519) in the loop of a conserved hairpin near the 3'-end of 16S rRNA in the 30S particle. May play a critical role in biogenesis of 30S subunits. The chain is Ribosomal RNA small subunit methyltransferase A from Chlamydia felis (strain Fe/C-56) (Chlamydophila felis).